The sequence spans 361 residues: MKFQLHCHDHHARRGTLTLAHGMIETPAFMPVGTYGAVKGLSPDELQTLGAEIILGNTFHLWLRPGLEVIEAHGGLHRFMHWDGPILTDSGGFQVFSLGALRKISEEGVRFRSPVNGDTCFLTPEESMRIQRVLNSDIVMIFDECTPYPVDMQIAEDSMQLSLRWAERSKAAHAGNPNALFGIVQGGMYESLRDRSIAGLYNIGFDGYAIGGLSVGEPKLEMQRILSHTAPQLPVDKPRYLMGVGTPEDIVRAVEQGIDMFDCVLPTRNARNGWLYTSQGVLKLRNSRYRLDTSPPDENCDCYTCRHFTRAYLHHLQRTGEMLGARLNSLHNLHYYQRLMSDIRKAIEAGQFEQFACRFSG.

The active-site Proton acceptor is Asp-89. Substrate is bound by residues 89 to 93 (DSGGF), Asp-143, Gln-185, and Gly-212. The tract at residues 243 to 249 (GVGTPED) is RNA binding. The active-site Nucleophile is Asp-262. The interval 267–271 (TRNAR) is RNA binding; important for wobble base 34 recognition. Residues Cys-300, Cys-302, Cys-305, and His-331 each contribute to the Zn(2+) site.

Belongs to the queuine tRNA-ribosyltransferase family. In terms of assembly, homodimer. Within each dimer, one monomer is responsible for RNA recognition and catalysis, while the other monomer binds to the replacement base PreQ1. Zn(2+) is required as a cofactor.

The catalysed reaction is 7-aminomethyl-7-carbaguanine + guanosine(34) in tRNA = 7-aminomethyl-7-carbaguanosine(34) in tRNA + guanine. It participates in tRNA modification; tRNA-queuosine biosynthesis. Its function is as follows. Catalyzes the base-exchange of a guanine (G) residue with the queuine precursor 7-aminomethyl-7-deazaguanine (PreQ1) at position 34 (anticodon wobble position) in tRNAs with GU(N) anticodons (tRNA-Asp, -Asn, -His and -Tyr). Catalysis occurs through a double-displacement mechanism. The nucleophile active site attacks the C1' of nucleotide 34 to detach the guanine base from the RNA, forming a covalent enzyme-RNA intermediate. The proton acceptor active site deprotonates the incoming PreQ1, allowing a nucleophilic attack on the C1' of the ribose to form the product. After dissociation, two additional enzymatic reactions on the tRNA convert PreQ1 to queuine (Q), resulting in the hypermodified nucleoside queuosine (7-(((4,5-cis-dihydroxy-2-cyclopenten-1-yl)amino)methyl)-7-deazaguanosine). The sequence is that of Queuine tRNA-ribosyltransferase from Nitrosomonas eutropha (strain DSM 101675 / C91 / Nm57).